Reading from the N-terminus, the 239-residue chain is Small ribosomal subunit protein uS3 (239 aa).

Positions 39 to 107 (IRAALMKTLK…EVLINIVEVR (69 aa)) constitute a KH type-2 domain. Positions 214-239 (AQDKKMAEQDHGGGGGDRRRRDRDAA) are disordered.

It belongs to the universal ribosomal protein uS3 family. In terms of assembly, part of the 30S ribosomal subunit. Forms a tight complex with proteins S10 and S14.

In terms of biological role, binds the lower part of the 30S subunit head. Binds mRNA in the 70S ribosome, positioning it for translation. The sequence is that of Small ribosomal subunit protein uS3 from Methylocella silvestris (strain DSM 15510 / CIP 108128 / LMG 27833 / NCIMB 13906 / BL2).